The sequence spans 525 residues: Cytochrome P450 4V2 (525 aa).

A helical transmembrane segment spans residues Leu13 to Leu33. Glu329 and Cys467 together coordinate heme.

It belongs to the cytochrome P450 family. It depends on heme as a cofactor.

Its subcellular location is the endoplasmic reticulum membrane. It carries out the reaction dodecanoate + reduced [NADPH--hemoprotein reductase] + O2 = 12-hydroxydodecanoate + oxidized [NADPH--hemoprotein reductase] + H2O + H(+). It catalyses the reaction tetradecanoate + reduced [NADPH--hemoprotein reductase] + O2 = 14-hydroxytetradecanoate + oxidized [NADPH--hemoprotein reductase] + H2O + H(+). The catalysed reaction is hexadecanoate + reduced [NADPH--hemoprotein reductase] + O2 = 16-hydroxyhexadecanoate + oxidized [NADPH--hemoprotein reductase] + H2O + H(+). The enzyme catalyses (5Z,8Z,11Z,14Z,17Z)-eicosapentaenoate + reduced [NADPH--hemoprotein reductase] + O2 = 20-hydroxy-(5Z,8Z,11Z,14Z,17Z)-eicosapentaenoate + oxidized [NADPH--hemoprotein reductase] + H2O + H(+). It carries out the reaction (4Z,7Z,10Z,13Z,16Z,19Z)-docosahexaenoate + reduced [NADPH--hemoprotein reductase] + O2 = 22-hydroxy-(4Z,7Z,10Z,13Z,16Z,19Z)-docosahexaenoate + oxidized [NADPH--hemoprotein reductase] + H2O + H(+). It participates in lipid metabolism; fatty acid metabolism. Inhibited by N-hydroxy-N'-(4-n-butyl-2-methylphenyl formamidine)(HET0016) with an IC(50) of 38 nM. Its function is as follows. A cytochrome P450 monooxygenase involved in fatty acid metabolism in the eye. Catalyzes the omega-hydroxylation of polyunsaturated fatty acids (PUFAs) docosahexaenoate (DHA) and its precursor eicosapentaenoate (EPA), and may contribute to the homeostasis of these retinal PUFAs. Omega hydroxylates saturated fatty acids such as laurate, myristate and palmitate, the catalytic efficiency decreasing in the following order: myristate &gt; laurate &gt; palmitate (C14&gt;C12&gt;C16). Mechanistically, uses molecular oxygen inserting one oxygen atom into a substrate, and reducing the second into a water molecule, with two electrons provided by NADPH via cytochrome P450 reductase (CPR; NADPH-ferrihemoprotein reductase). This is Cytochrome P450 4V2 (CYP4V2) from Pongo abelii (Sumatran orangutan).